Consider the following 138-residue polypeptide: Large ribosomal subunit protein uL16 (138 aa).

Positions methionine 1 to glutamine 13 are enriched in basic residues. The disordered stretch occupies residues methionine 1–valine 20.

The protein belongs to the universal ribosomal protein uL16 family. Part of the 50S ribosomal subunit.

In terms of biological role, binds 23S rRNA and is also seen to make contacts with the A and possibly P site tRNAs. This Verminephrobacter eiseniae (strain EF01-2) protein is Large ribosomal subunit protein uL16.